The primary structure comprises 314 residues: Olfactory receptor 52B4 (314 aa).

Residues 1–27 are Extracellular-facing; it reads MPTVNHSGTSHTVFHLLGIPGLQDQHM. Asn5 is a glycosylation site (N-linked (GlcNAc...) asparagine). A helical membrane pass occupies residues 28–48; the sequence is WISIPFFISYVTALLGNSLLI. Residues 49 to 56 are Cytoplasmic-facing; it reads FIILTKRS. The chain crosses the membrane as a helical span at residues 57 to 77; the sequence is LHEPMYLFLCMLAGADIVLST. Topologically, residues 78–101 are extracellular; that stretch reads CTIPQALAIFWFRAGDISLDRCIT. Cys99 and Cys191 are disulfide-bonded. A helical transmembrane segment spans residues 102–122; it reads QLFFIHSTFISESGILLVMAF. At 123-141 the chain is on the cytoplasmic side; that stretch reads DHYIAICYPLRYTTILTNA. A helical transmembrane segment spans residues 142-162; sequence LIKKICVTVSLRSYGTIFPII. Over 163–198 the chain is Extracellular; sequence FLLKRLTFCQNNIIPHTFCEHIGLAKYACNDIRINI. The helical transmembrane segment at 199-219 threads the bilayer; the sequence is WYGFSILMSTVVLDVVLIFIS. The Cytoplasmic segment spans residues 220-239; the sequence is YMLILHAVFHMPSPDACHKA. Residues 240–260 form a helical membrane-spanning segment; that stretch reads LNTFGSHVCIIILFYGSGIFT. Residues 261–275 lie on the Extracellular side of the membrane; it reads ILTQRFGRHIPPCIH. The helical transmembrane segment at 276–296 threads the bilayer; it reads IPLANVCILAPPMLNPIIYGI. Over 297–314 the chain is Cytoplasmic; it reads KTKQIQEQVVQFLFIKQK.

It belongs to the G-protein coupled receptor 1 family.

The protein resides in the cell membrane. Odorant receptor. This is Olfactory receptor 52B4 (OR52B4) from Homo sapiens (Human).